Reading from the N-terminus, the 360-residue chain is GTPase Obg (360 aa).

One can recognise an Obg domain in the interval 1 to 156 (MFVDSVEIII…KCVRLELKLI (156 aa)). One can recognise an OBG-type G domain in the interval 157–360 (ADIGLVGFPN…LKFVLLKALQ (204 aa)). Residues 163–170 (GFPNAGKS), 188–192 (FTTLV), 210–213 (DIPG), 279–282 (NKCD), and 341–343 (SAV) each bind GTP. Residues Ser-170 and Thr-190 each contribute to the Mg(2+) site.

This sequence belongs to the TRAFAC class OBG-HflX-like GTPase superfamily. OBG GTPase family. Monomer. It depends on Mg(2+) as a cofactor.

It is found in the cytoplasm. Functionally, an essential GTPase which binds GTP, GDP and possibly (p)ppGpp with moderate affinity, with high nucleotide exchange rates and a fairly low GTP hydrolysis rate. Plays a role in control of the cell cycle, stress response, ribosome biogenesis and in those bacteria that undergo differentiation, in morphogenesis control. This chain is GTPase Obg, found in Helicobacter pylori (strain P12).